A 1377-amino-acid chain; its full sequence is DNA-directed RNA polymerase subunit beta' (1377 aa).

Residues Cys-60, Cys-62, Cys-75, and Cys-78 each coordinate Zn(2+). Residues Asp-449, Asp-451, and Asp-453 each coordinate Mg(2+). Positions 777, 851, 858, and 861 each coordinate Zn(2+).

Belongs to the RNA polymerase beta' chain family. The RNAP catalytic core consists of 2 alpha, 1 beta, 1 beta' and 1 omega subunit. When a sigma factor is associated with the core the holoenzyme is formed, which can initiate transcription. The cofactor is Mg(2+). Zn(2+) is required as a cofactor.

The enzyme catalyses RNA(n) + a ribonucleoside 5'-triphosphate = RNA(n+1) + diphosphate. DNA-dependent RNA polymerase catalyzes the transcription of DNA into RNA using the four ribonucleoside triphosphates as substrates. In Borrelia hermsii (strain HS1 / DAH), this protein is DNA-directed RNA polymerase subunit beta'.